Here is a 456-residue protein sequence, read N- to C-terminus: High mobility group B protein 6 (456 aa).

4 disordered regions span residues 1 to 42 (MATN…KSAK), 117 to 142 (SSLT…KRPS), 238 to 258 (AEQD…PKHP), and 349 to 389 (MLKK…YFLF). Positions 11 to 21 (KKPRNSRKALK) are enriched in basic residues. The segment at residues 138–206 (TKRPSSSYVL…AYLQVIAKEK (69 aa)) is a DNA-binding region (HMG box 1). The segment covering 240–254 (QDNKKKNKKEKDPLK) has biased composition (basic and acidic residues). A DNA-binding region (HMG box 2) is located at residues 255–321 (PKHPVSAFLV…TYLQAMEEYK (67 aa)). The span at 354–363 (EKTDNLIKKE) shows a compositional bias: basic and acidic residues. Positions 379–447 (PKKPASSYFL…AYKKEVEAYN (69 aa)) form a DNA-binding region, HMG box 3.

The protein localises to the nucleus. In Arabidopsis thaliana (Mouse-ear cress), this protein is High mobility group B protein 6 (HMGB6).